The chain runs to 473 residues: O-methyltransferase ARMGADRAFT_1088206 (473 aa).

S-adenosyl-L-methionine contacts are provided by residues 276 to 277 (AG), Asp299, 330 to 331 (DM), and Arg348. His352 acts as the Proton acceptor in catalysis.

Belongs to the class I-like SAM-binding methyltransferase superfamily. Cation-independent O-methyltransferase family.

Its pathway is secondary metabolite biosynthesis. In terms of biological role, O-methyltransferase, part of the gene cluster that mediates the biosynthesis of melleolides, a range of antifungal and phytotoxic polyketide derivatives composed of an orsellinic acid (OA) moiety esterified to various sesquiterpene alcohols. The first step in melleolides biosynthesis is performed by the delta(6)-protoilludene synthase PRO1 which catalyzes the cyclization of farnesyl diphosphate to protoilludene. The orsellinic acid synthase armB produces OA by condensing acetyl-CoA with 3 malonyl-CoA units in a three-round chain elongation reaction folowed by a C2-C7 ring closure. ArmB further catalyzes the trans-esterification of OA to the various sesquiterpene alcohols resulting from the hydroxylation of protoilludene. The melleolides cluster also includes 5 cytochrome P450 monooxygenases, 4 NAD(+)-dependent oxidoreductases, one flavin-dependent oxidoreductase, and one O-methyltransferase. The cytochrome P450 monooxygenases may be involved in protoilludene hydroxylation to elaborate melleolides with multiple alcohol groups, such as melleolide D, which carries alcohol functionalities at C-4, C-5, C-10, and C-13. The role of the NAD(+)-dependent enzymes remains unknown. Numerous melleolides, including arnamial, show 5'-O-methylation of the aromatic moiety which may be catalyzed by the methyltransferase encoded in the cluster. The flavin-dependent oxidoreductase might represent the dehydrogenase yielding the aldehyde in position 1 of arnamial and other melleolides. Finally, several halogenase localized outside of the cluster, are able to catalyze the transfer of a single chlorine atom to the melleolide backbone, resulting in a 6'-chloromelleolide product. The polypeptide is O-methyltransferase ARMGADRAFT_1088206 (Armillaria gallica (Bulbous honey fungus)).